An 871-amino-acid polypeptide reads, in one-letter code: Protein translocase subunit SecA (871 aa).

ATP contacts are provided by residues Gln80, 98 to 102, and Asp537; that span reads GEGKT.

Belongs to the SecA family. As to quaternary structure, monomer and homodimer. Part of the essential Sec protein translocation apparatus which comprises SecA, SecYEG and auxiliary proteins SecDF. Other proteins may also be involved. A single SecA monomer interacts with SecY in the channel.

It is found in the cell inner membrane. It localises to the cytoplasm. The catalysed reaction is ATP + H2O + cellular proteinSide 1 = ADP + phosphate + cellular proteinSide 2.. Functionally, part of the Sec protein translocase complex. Interacts with the SecYEG preprotein conducting channel. Has a central role in coupling the hydrolysis of ATP to the transfer of proteins into and across the cell membrane, serving as an ATP-driven molecular motor driving the stepwise translocation of polypeptide chains across the membrane. This Thermotoga maritima (strain ATCC 43589 / DSM 3109 / JCM 10099 / NBRC 100826 / MSB8) protein is Protein translocase subunit SecA.